Here is a 164-residue protein sequence, read N- to C-terminus: Peptide deformylase (164 aa).

Residues cysteine 87 and histidine 129 each contribute to the Fe cation site. Glutamate 130 is a catalytic residue. Position 133 (histidine 133) interacts with Fe cation.

Belongs to the polypeptide deformylase family. The cofactor is Fe(2+).

It carries out the reaction N-terminal N-formyl-L-methionyl-[peptide] + H2O = N-terminal L-methionyl-[peptide] + formate. Removes the formyl group from the N-terminal Met of newly synthesized proteins. Requires at least a dipeptide for an efficient rate of reaction. N-terminal L-methionine is a prerequisite for activity but the enzyme has broad specificity at other positions. The sequence is that of Peptide deformylase from Thermotoga maritima (strain ATCC 43589 / DSM 3109 / JCM 10099 / NBRC 100826 / MSB8).